Here is a 476-residue protein sequence, read N- to C-terminus: Protein transport protein Sec61 subunit alpha isoform B (476 aa).

At 2–33 the chain is on the cytoplasmic side; the sequence is GIKFLEVIKPFCAVLPEIQKPERKIQFREKVL. A helical transmembrane segment spans residues 34–53; it reads WTAITLFIFLVCCQIPLFGI. At 54-76 the chain is on the lumenal side; that stretch reads MSSDSADPFYWMRVILASNRGTL. A helical membrane pass occupies residues 77–96; it reads MELGISPIVTSGLIMQLLAG. Topologically, residues 97–117 are cytoplasmic; the sequence is AKIIEVGDTPKDRALFNGAQK. A helical membrane pass occupies residues 118–138; it reads LFGMIITIGQAIVYVMTGMYG. At 139-144 the chain is on the lumenal side; it reads DPSDMG. A helical membrane pass occupies residues 145-165; that stretch reads AGICLLIIIQLFVAGLIVLLL. Residues 166–172 are Cytoplasmic-facing; it reads DELLQKG. A helical membrane pass occupies residues 173–193; the sequence is YGLGSGISLFIATNICETIVW. Topologically, residues 194–240 are lumenal; that stretch reads KAFSPTTVNTGRGTEFEGAIIALFHLLATRTDKVRALREAFYRQNLP. A helical membrane pass occupies residues 241–261; it reads NLMNLLATVFVFGVVIYFQGF. The Cytoplasmic portion of the chain corresponds to 262–288; the sequence is RVDLPIKSARYRGQYNTYPIKLFYTSN. Residues 289-309 form a helical membrane-spanning segment; it reads IPIILQSALVSNLYVISQMLS. Over 310–354 the chain is Lumenal; sequence TRFSGNFLVNLLGTWSDTSSGGPARAYPVGGLCYYFSPPESFGSV. Residues 355–375 traverse the membrane as a helical segment; that stretch reads LDDPIHAAIYICFMLGSCAFF. The Cytoplasmic segment spans residues 376-420; sequence SKTWIEVSGSSAKDVAKQLKEQQMVMRGHRETSMVHELNRYIPTA. A helical transmembrane segment spans residues 421–441; it reads AAFGGLCIGGLSVMADFLGAI. Residues 442 to 445 are Lumenal-facing; it reads GSGT. The chain crosses the membrane as a helical span at residues 446-462; it reads GILLAVTIIYQYFEIFV. The Cytoplasmic segment spans residues 463 to 476; that stretch reads KEQSEMGSMGALLF.

The protein belongs to the SecY/SEC61-alpha family. In terms of assembly, the SEC61 channel-forming translocon complex consists of channel-forming core components SEC61A1, SEC61B and SEC61G and different auxiliary components such as SEC62 and SEC63.

The protein resides in the endoplasmic reticulum membrane. Functionally, component of SEC61 channel-forming translocon complex that mediates transport of signal peptide-containing precursor polypeptides across the endoplasmic reticulum (ER). Forms a ribosome receptor and a gated pore in the ER membrane, both functions required for cotranslational translocation of nascent polypeptides. This Oncorhynchus mykiss (Rainbow trout) protein is Protein transport protein Sec61 subunit alpha isoform B (sec61ab).